We begin with the raw amino-acid sequence, 328 residues long: Bidirectional sugar transporter SWEET16 (328 aa).

The Extracellular segment spans residues 1 to 5 (MADPS). A helical transmembrane segment spans residues 6-26 (FFVGIVGNVISILVFASPIAT). The MtN3/slv 1 domain occupies 6–92 (FFVGIVGNVI…TLYLAYAPRE (87 aa)). Over 27-38 (FRRIVRSKSTEE) the chain is Cytoplasmic. A helical membrane pass occupies residues 39-56 (FRWLPYVTTLLSTSLWTF). Over 57-63 (YGLHKPG) the chain is Extracellular. The helical transmembrane segment at 64–84 (GLLIVTVNGSGAALEAIYVTL) threads the bilayer. Residues 85 to 99 (YLAYAPRETKAKMVK) are Cytoplasmic-facing. The helical transmembrane segment at 100 to 120 (VVLAVNVGALAAVVAVALVAL) threads the bilayer. Topologically, residues 121–125 (HGGVR) are extracellular. A helical transmembrane segment spans residues 126 to 146 (LFVVGVLCAALTIGMYAAPMA). Residues 127-213 (FVVGVLCAAL…LYMAYRRTKK (87 aa)) enclose the MtN3/slv 2 domain. At 147–161 (AMRTVVKTRSVEYMP) the chain is on the cytoplasmic side. A helical membrane pass occupies residues 162 to 182 (FSLSFFLFLNGGVWSVYSLLV). At 183 to 185 (KDY) the chain is on the extracellular side. A helical transmembrane segment spans residues 186–206 (FIGIPNAIGFALGTAQLALYM). Over 207–328 (AYRRTKKPAG…ATTAGPGDRH (122 aa)) the chain is Cytoplasmic. Residues 288–299 (HQHHGGHHHHHR) show a composition bias toward basic residues. Positions 288–328 (HQHHGGHHHHHRFDTVPDDDDEAVAAGGTTPATTAGPGDRH) are disordered. Residues 312–328 (AAGGTTPATTAGPGDRH) are compositionally biased toward low complexity.

The protein belongs to the SWEET sugar transporter family. In terms of assembly, forms homooligomers and/or heterooligomers.

The protein resides in the cell membrane. Its function is as follows. Mediates both low-affinity uptake and efflux of sugar across the plasma membrane. The protein is Bidirectional sugar transporter SWEET16 (SWEET16) of Oryza sativa subsp. japonica (Rice).